Here is a 462-residue protein sequence, read N- to C-terminus: MELKNMELKRKLTINEINFIVDFIQPRPYIPPDIENAIIFKKKKGIIDQLVTIEIYESLIPKLKEEIEKQYVNSLIDPGECVGIIGAQSMGEYSTQATLNTFHVAGVDTGSSTGVSRFQDLINASKTVKIDNISLFFKPLFVKKNITELRKLVASKLIEVKLSHLMITSVIVKTEEISQYRQEIESCIELYNDEHFNYEDYEFCLKITLSRELLLKHRLHPSVIKNKLEEYNNDCKYAFLPISSQQILFFIFIYVNTDECIEKIIQDLMDKKICGVDGIIRYDFKRKDLFDDEWYIETTGGSFSNINCLADIFDLTKTKTTSIWDLYNTFGIEATKQFLIQELKTVMDGVDICHIKLLVERMTYSGTIEPITRYTMRNDESPLSRASFEESFETFLKAAKFKEIEPFTGVSASVIGGKKTEVGTYMCDILIDMEKLNLGDLKTIEDDDEYDYEDDGDLVYVE.

This sequence belongs to the RNA polymerase beta' chain family.

The enzyme catalyses RNA(n) + a ribonucleoside 5'-triphosphate = RNA(n+1) + diphosphate. Functionally, component of the DNA-dependent RNA polymerase that catalyzes the transcription in the cytoplasm of viral DNA into RNA using the four ribonucleoside triphosphates as substrates. This chain is Probable DNA-directed RNA polymerase subunit 343L, found in Acheta domesticus (House cricket).